The following is a 253-amino-acid chain: MSKNADLEAIPAAEEIKKPNPPKEEASIKGFTWWRRTLQYNTGLGLSEDEKLNYENDYKYILERKQCKQCYEYKDWILKYSPTVTFMIQQIAKLSDGNPNIDGKNLKPFDESKIICDICPEWKSGGFHPDLGILICQNRIRNKWHLEDTLAHELVHQFDNLKWKVNWLNLKQHACSEIRASSLSGECRFGQEFARRGFGFKIANGHQECVKRRAILSVMGNPNCKDRAEAELVVNEVWDSCFNDTRPFEEIYR.

The segment at 1 to 23 (MSKNADLEAIPAAEEIKKPNPPK) is disordered. Basic and acidic residues predominate over residues 14 to 23 (EEIKKPNPPK). A divalent metal cation is bound at residue His-152. Glu-153 is an active-site residue. Position 156 (His-156) interacts with a divalent metal cation.

Belongs to the peptidase M76 family.

The protein resides in the mitochondrion inner membrane. In terms of biological role, has a dual role in the assembly of mitochondrial ATPase. Acts as a protease that removes N-terminal residues of mitochondrial ATPase CF(0) subunit 6 at the intermembrane space side. Also involved in the correct assembly of the membrane-embedded ATPase CF(0) particle, probably mediating association of subunit 6 with the subunit 9 ring. The polypeptide is Mitochondrial inner membrane protease ATP23 (ATP23) (Vanderwaltozyma polyspora (strain ATCC 22028 / DSM 70294 / BCRC 21397 / CBS 2163 / NBRC 10782 / NRRL Y-8283 / UCD 57-17) (Kluyveromyces polysporus)).